The chain runs to 299 residues: Small ribosomal subunit protein uS2 (299 aa).

The disordered stretch occupies residues A210–S299. Polar residues predominate over residues W275–P285.

This sequence belongs to the universal ribosomal protein uS2 family. As to quaternary structure, component of the small ribosomal subunit. Mature ribosomes consist of a small (40S) and a large (60S) subunit. The 40S subunit contains about 33 different proteins and 1 molecule of RNA (18S). The 60S subunit contains about 49 different proteins and 3 molecules of RNA (28S, 5.8S and 5S). Interacts with ribosomal protein S21.

Its subcellular location is the cytoplasm. Its function is as follows. Required for the assembly and/or stability of the 40S ribosomal subunit. Required for the processing of the 20S rRNA-precursor to mature 18S rRNA in a late step of the maturation of 40S ribosomal subunits. This Ornithodoros parkeri (Soft tick) protein is Small ribosomal subunit protein uS2.